Consider the following 140-residue polypeptide: Small ribosomal subunit protein bS16 (140 aa).

Positions 86 to 140 (TVGKAKQAAKREEEAKQAAKEAAEAKAAAEAEAAAAAEAAKAEDAPDGETESSEG) are disordered. Over residues 94–114 (AKREEEAKQAAKEAAEAKAAA) the composition is skewed to basic and acidic residues. The segment covering 115-124 (EAEAAAAAEA) has biased composition (low complexity). A compositionally biased stretch (acidic residues) spans 130 to 140 (APDGETESSEG).

Belongs to the bacterial ribosomal protein bS16 family.

The polypeptide is Small ribosomal subunit protein bS16 (Parasynechococcus marenigrum (strain WH8102)).